The following is a 560-amino-acid chain: Serine/threonine-protein kinase TOS3 (560 aa).

One can recognise a Protein kinase domain in the interval 50–344; that stretch reads FEILATLGNG…LADIKVHPFM (295 aa). Residues 56-64 and Lys79 each bind ATP; that span reads LGNGQYGKV. The active-site Proton acceptor is Asp189.

This sequence belongs to the protein kinase superfamily. Ser/Thr protein kinase family. Post-translationally, autophosphorylated.

The enzyme catalyses L-seryl-[protein] + ATP = O-phospho-L-seryl-[protein] + ADP + H(+). It carries out the reaction L-threonyl-[protein] + ATP = O-phospho-L-threonyl-[protein] + ADP + H(+). One of the three SNF1 protein kinases (with SAK1 and ELM1) which are required for growth on nonfermentable carbon sources and nonpreferred sugars and for response to environmental stress. Activates SNF1 by phosphorylation of its activation-loop 'Thr-210'. Required for the regulation by SNF1 of the transcription of a large set of genes, the modification the activity of metabolic enzymes, and the control of various nutrient-responsive cellular developmental processes. Also phosphorylates GAL83, MIG1 and SIP2. In Saccharomyces cerevisiae (strain ATCC 204508 / S288c) (Baker's yeast), this protein is Serine/threonine-protein kinase TOS3 (TOS3).